We begin with the raw amino-acid sequence, 56 residues long: Small ribosomal subunit protein uS14 (56 aa).

Zn(2+) is bound by residues cysteine 21, cysteine 24, cysteine 39, and cysteine 42.

It belongs to the universal ribosomal protein uS14 family. Zn(2+) is required as a cofactor.

This Triticum aestivum (Wheat) protein is Small ribosomal subunit protein uS14 (RPS29).